A 648-amino-acid polypeptide reads, in one-letter code: Cell surface glycoprotein MUC18 (648 aa).

An N-terminal signal peptide occupies residues 1 to 23; it reads MGLPKLVCVFLFAACCCCRRAAG. Ig-like V-type domains follow at residues 24–131 and 141–244; these read VPGE…HYVE and PTIQ…KEVT. Topologically, residues 24-563 are extracellular; the sequence is VPGEEKQPVP…LPQPESKGVV (540 aa). 5 disulfide bridges follow: cysteine 50/cysteine 118, cysteine 163/cysteine 225, cysteine 274/cysteine 322, cysteine 367/cysteine 409, and cysteine 454/cysteine 501. N-linked (GlcNAc...) asparagine glycosylation occurs at asparagine 58. 3 Ig-like C2-type domains span residues 246-332, 337-426, and 432-512; these read PVFY…TTIT, PLEL…QLVS, and SPWM…SNTT. Residues 281–304 are disordered; that stretch reads QPHFTINKKDPSTGEMEEESTDEN. Asparagine 510 carries an N-linked (GlcNAc...) asparagine glycan. Residues 532 to 549 show a composition bias toward polar residues; that stretch reads TGLSTLTVSPHTRANSTS. The disordered stretch occupies residues 532–554; that stretch reads TGLSTLTVSPHTRANSTSTEKKL. A helical membrane pass occupies residues 564–584; it reads IVAVIVCTLVLAVLGAALYFF. The Cytoplasmic segment spans residues 585–648; it reads YKKGKLPCGR…QGEKYIDLRH (64 aa). Residues serine 608 and serine 616 each carry the phosphoserine modification. Positions 625–648 are disordered; the sequence is LLQGSNGDKRAPGDQGEKYIDLRH. Basic and acidic residues predominate over residues 631 to 648; sequence GDKRAPGDQGEKYIDLRH.

In terms of tissue distribution, detected in melanoma cell lines.

The protein localises to the membrane. Functionally, plays a role in cell adhesion, and in cohesion of the endothelial monolayer at intercellular junctions in vascular tissue. Its expression may allow melanoma cells to interact with cellular elements of the vascular system, thereby enhancing hematogeneous tumor spread. Could be an adhesion molecule active in neural crest cells during embryonic development. Acts as a surface receptor that triggers tyrosine phosphorylation of FYN and PTK2/FAK1, and a transient increase in the intracellular calcium concentration. This chain is Cell surface glycoprotein MUC18 (Mcam), found in Mus musculus (Mouse).